Here is a 327-residue protein sequence, read N- to C-terminus: Immediate early response gene 5 protein (327 aa).

Disordered regions lie at residues 59 to 166 (GPAG…GVFP) and 227 to 313 (GPAG…DKPV). The segment covering 71 to 84 (QPGEPAAGPPAGWG) has biased composition (low complexity). Residues 253–262 (GEDDDAEEME) are compositionally biased toward acidic residues. Polar residues predominate over residues 265-278 (NVANLISIFGSSFS).

This sequence belongs to the IER family. Monomer. Homodimer. Associates with the catalytic subunit of protein phosphatase PP2A. Interacts (via N- and C-terminal regions) with PPP2R2B. Interacts with PPP2R2A, PPP2R2C and PPP2R2D. Interacts (via N-terminus) with RPS6KB1. Interacts (via central region) with HSF1; this interaction promotes PPP2CA-induced HSF1 dephosphorylation, leading to enhanced HSF1 transcriptional activity. In terms of tissue distribution, expressed in acute myeloid leukemia (AML) cells.

Its subcellular location is the nucleus. It is found in the cytoplasm. Functionally, plays a role as a transcription factor. Mediates positive transcriptional regulation of several chaperone genes during the heat shock response in a HSF1-dependent manner. Mediates negative transcriptional regulation of CDC25B expression. Plays a role in the dephosphorylation of the heat shock factor HSF1 and ribosomal protein S6 kinase (S6K) by the protein phosphatase PP2A. Involved in the regulation of cell proliferation and resistance to thermal stress. Involved in the cell cycle checkpoint and survival in response to ionizing radiation. Associates with chromatin to the CDC25B promoter. The chain is Immediate early response gene 5 protein (IER5) from Homo sapiens (Human).